The following is a 535-amino-acid chain: Glutamate--cysteine ligase (535 aa).

It belongs to the glutamate--cysteine ligase type 1 family. Type 1 subfamily.

It catalyses the reaction L-cysteine + L-glutamate + ATP = gamma-L-glutamyl-L-cysteine + ADP + phosphate + H(+). It participates in sulfur metabolism; glutathione biosynthesis; glutathione from L-cysteine and L-glutamate: step 1/2. The polypeptide is Glutamate--cysteine ligase (Pseudomonas savastanoi pv. phaseolicola (strain 1448A / Race 6) (Pseudomonas syringae pv. phaseolicola (strain 1448A / Race 6))).